The following is a 195-amino-acid chain: Endoribonuclease YbeY (195 aa).

3 residues coordinate Zn(2+): His152, His156, and His162.

Belongs to the endoribonuclease YbeY family. It depends on Zn(2+) as a cofactor.

The protein localises to the cytoplasm. Functionally, single strand-specific metallo-endoribonuclease involved in late-stage 70S ribosome quality control and in maturation of the 3' terminus of the 16S rRNA. This chain is Endoribonuclease YbeY, found in Rhodopseudomonas palustris (strain BisB5).